A 140-amino-acid polypeptide reads, in one-letter code: Protein SNA4 (140 aa).

Residues 1–8 are Cytoplasmic-facing; that stretch reads MCCYCVCC. 5 S-palmitoyl cysteine lipidation sites follow: cysteine 2, cysteine 3, cysteine 5, cysteine 7, and cysteine 8. A helical transmembrane segment spans residues 9-29; the sequence is TVSDFILYIVAFFFPPAAVLL. At 30–41 the chain is on the vacuolar side; the sequence is RSGPCSSDFLLN. A helical membrane pass occupies residues 42–62; it reads VLLTLLGFLPGMLHAFYYITI. The Cytoplasmic segment spans residues 63–140; it reads TSPLRNAEYV…LVESPPPYVP (78 aa). Residues 84–140 are disordered; sequence RNVPSNRPQNSQTPQNRPQQGSSARNVYPSVETPLLQGAAPHDNKQSLVESPPPYVP. Over residues 85–108 the composition is skewed to polar residues; it reads NVPSNRPQNSQTPQNRPQQGSSAR. A Glycyl lysine isopeptide (Lys-Gly) (interchain with G-Cter in ubiquitin) cross-link involves residue lysine 128. At serine 134 the chain carries Phosphoserine.

The protein belongs to the UPF0057 (PMP3) family.

The protein localises to the vacuole membrane. This is Protein SNA4 (SNA4) from Saccharomyces cerevisiae (strain ATCC 204508 / S288c) (Baker's yeast).